We begin with the raw amino-acid sequence, 330 residues long: 7,8-didemethyl-8-hydroxy-5-deazariboflavin synthase (330 aa).

The region spanning Val-5–Asn-245 is the Radical SAM core domain. [4Fe-4S] cluster-binding residues include Cys-19, Cys-23, and Cys-26.

This sequence belongs to the radical SAM superfamily. CofG family. In terms of assembly, consists of two subunits, CofG and CofH. It depends on [4Fe-4S] cluster as a cofactor.

The enzyme catalyses 5-amino-5-(4-hydroxybenzyl)-6-(D-ribitylimino)-5,6-dihydrouracil + S-adenosyl-L-methionine = 7,8-didemethyl-8-hydroxy-5-deazariboflavin + 5'-deoxyadenosine + L-methionine + NH4(+) + H(+). The protein operates within cofactor biosynthesis; coenzyme F0 biosynthesis. In terms of biological role, catalyzes the radical-mediated synthesis of 7,8-didemethyl-8-hydroxy-5-deazariboflavin from 5-amino-5-(4-hydroxybenzyl)-6-(D-ribitylimino)-5,6-dihydrouracil. In Methanococcoides burtonii (strain DSM 6242 / NBRC 107633 / OCM 468 / ACE-M), this protein is 7,8-didemethyl-8-hydroxy-5-deazariboflavin synthase.